A 318-amino-acid polypeptide reads, in one-letter code: Magnetosome protein MamM (318 aa).

The tract at residues 1-210 (MRKSGCTVCS…FMDAYRGLMD (210 aa)) is transmembrane domain (TMD). Transmembrane regions (helical) follow at residues 13–33 (IGWVGLAVNTVLMVMKAFVGL), 39–59 (AMLADAMYSLKDMLNALMVVI), 81–101 (FILSMVVSVVFIGLTGYLLVH), and 117–137 (LIVLWAALVSVGVNVAMYFYS). The C-terminal domain (CTD) stretch occupies residues 211–318 (HTAGEAVQNR…DEVMLSKVDN (108 aa)). Fe cation contacts are provided by Asp249, His264, His285, and Glu289.

It belongs to the cation diffusion facilitator (CDF) transporter (TC 2.A.4) family. Forms homodimers via its C-terminal domain (CTD) in the presence of metal cations. Interacts with MamB via their CTD.

Its subcellular location is the magnetosome membrane. It localises to the cell inner membrane. In terms of biological role, probably plays a role in biomineralization. Required for stable accumulation of MamB. Probably binds and transports iron. May nucleate iron crystal formation. This chain is Magnetosome protein MamM (mamM), found in Paramagnetospirillum magneticum (strain ATCC 700264 / AMB-1) (Magnetospirillum magneticum).